Here is a 292-residue protein sequence, read N- to C-terminus: Elongation factor Ts (292 aa).

The segment at 80–83 is involved in Mg(2+) ion dislocation from EF-Tu; sequence TDFV.

The protein belongs to the EF-Ts family.

It is found in the cytoplasm. Associates with the EF-Tu.GDP complex and induces the exchange of GDP to GTP. It remains bound to the aminoacyl-tRNA.EF-Tu.GTP complex up to the GTP hydrolysis stage on the ribosome. The polypeptide is Elongation factor Ts (Tolumonas auensis (strain DSM 9187 / NBRC 110442 / TA 4)).